The sequence spans 386 residues: S-adenosylmethionine synthase (386 aa).

An ATP-binding site is contributed by H16. Mg(2+) is bound at residue D18. Residue E44 coordinates K(+). 2 residues coordinate L-methionine: E57 and Q100. A flexible loop region spans residues 100–110 (QSSDIAQGVDR). ATP-binding positions include 165–167 (DAK), D240, 246–247 (RK), A263, and K267. L-methionine is bound at residue D240. K271 contributes to the L-methionine binding site.

This sequence belongs to the AdoMet synthase family. In terms of assembly, homotetramer; dimer of dimers. It depends on Mg(2+) as a cofactor. K(+) is required as a cofactor.

It is found in the cytoplasm. The enzyme catalyses L-methionine + ATP + H2O = S-adenosyl-L-methionine + phosphate + diphosphate. The protein operates within amino-acid biosynthesis; S-adenosyl-L-methionine biosynthesis; S-adenosyl-L-methionine from L-methionine: step 1/1. In terms of biological role, catalyzes the formation of S-adenosylmethionine (AdoMet) from methionine and ATP. The overall synthetic reaction is composed of two sequential steps, AdoMet formation and the subsequent tripolyphosphate hydrolysis which occurs prior to release of AdoMet from the enzyme. The sequence is that of S-adenosylmethionine synthase from Francisella philomiragia subsp. philomiragia (strain ATCC 25017 / CCUG 19701 / FSC 153 / O#319-036).